The sequence spans 181 residues: Adenylate kinase (181 aa).

10–15 (GAGKGT) lines the ATP pocket. Residues 30 to 59 (STGELFRRNIEKDTKLGHEAKKYLDAGDLV) are NMP. AMP-binding positions include Thr-31, Arg-36, 57-59 (DLV), 85-88 (GYPR), and Gln-92. Residues 126-132 (GRGRADD) are LID. Arg-127 serves as a coordination point for ATP. Residues Arg-129 and Arg-140 each contribute to the AMP site. Gly-166 contacts ATP.

It belongs to the adenylate kinase family. In terms of assembly, monomer.

The protein resides in the cytoplasm. The catalysed reaction is AMP + ATP = 2 ADP. Its pathway is purine metabolism; AMP biosynthesis via salvage pathway; AMP from ADP: step 1/1. Functionally, catalyzes the reversible transfer of the terminal phosphate group between ATP and AMP. Plays an important role in cellular energy homeostasis and in adenine nucleotide metabolism. The chain is Adenylate kinase from Mycobacterium leprae (strain Br4923).